A 325-amino-acid chain; its full sequence is Probable cell division protein WhiA (325 aa).

The H-T-H motif DNA-binding region spans 280-313 (SLKELGSMLKNPLGKSGVNHRLRKIDKIAEELRK).

Belongs to the WhiA family.

Functionally, involved in cell division and chromosome segregation. The polypeptide is Probable cell division protein WhiA (Caldicellulosiruptor saccharolyticus (strain ATCC 43494 / DSM 8903 / Tp8T 6331)).